We begin with the raw amino-acid sequence, 439 residues long: Histidine--tRNA ligase (439 aa).

Belongs to the class-II aminoacyl-tRNA synthetase family. In terms of assembly, homodimer.

The protein localises to the cytoplasm. It carries out the reaction tRNA(His) + L-histidine + ATP = L-histidyl-tRNA(His) + AMP + diphosphate + H(+). In Leptospira borgpetersenii serovar Hardjo-bovis (strain L550), this protein is Histidine--tRNA ligase.